Here is a 106-residue protein sequence, read N- to C-terminus: DNA-directed RNA polymerase subunit Rpo6 (106 aa).

Belongs to the archaeal Rpo6/eukaryotic RPB6 RNA polymerase subunit family. Part of the RNA polymerase complex.

The protein resides in the cytoplasm. The enzyme catalyses RNA(n) + a ribonucleoside 5'-triphosphate = RNA(n+1) + diphosphate. In terms of biological role, DNA-dependent RNA polymerase (RNAP) catalyzes the transcription of DNA into RNA using the four ribonucleoside triphosphates as substrates. The sequence is that of DNA-directed RNA polymerase subunit Rpo6 from Pyrobaculum aerophilum (strain ATCC 51768 / DSM 7523 / JCM 9630 / CIP 104966 / NBRC 100827 / IM2).